The chain runs to 496 residues: Probable 26S proteasome non-ATPase regulatory subunit 3 (496 aa).

Positions 249 to 428 (ARFLYYLGRI…GYMRSKESTD (180 aa)) constitute a PCI domain. The disordered stretch occupies residues 458-480 (RYPPKSYGKELESAEERREREQQ). Over residues 464–480 (YGKELESAEERREREQQ) the composition is skewed to basic and acidic residues.

It belongs to the proteasome subunit S3 family. The 26S proteasome is composed of a core protease, known as the 20S proteasome, capped at one or both ends by the 19S regulatory complex (RC). The RC is composed of at least 18 different subunits in two subcomplexes, the base and the lid, which form the portions proximal and distal to the 20S proteolytic core, respectively.

Functionally, acts as a regulatory subunit of the 26 proteasome which is involved in the ATP-dependent degradation of ubiquitinated proteins. The sequence is that of Probable 26S proteasome non-ATPase regulatory subunit 3 (Dox-A2) from Anopheles gambiae (African malaria mosquito).